Reading from the N-terminus, the 792-residue chain is Starch synthase 2, chloroplastic/amyloplastic (792 aa).

A chloroplast-targeting transit peptide spans 1–55 (MASVAESSFPLLCQIKTQRRINSSTLRHSRVSYHDLPSGSLSFRSRSFVLGHRCK). A disordered region spans residues 105–295 (IKESTPDLDD…GKDEEKPPPL (191 aa)). A compositionally biased stretch (polar residues) spans 145–156 (GSVSPSTYGKSS). Residues 179 to 192 (SSASVISSSPVTSP) show a composition bias toward low complexity. The span at 221-233 (SVMTSPEKTSDPV) shows a compositional bias: polar residues. Residues 266–275 (KTEKYVEKTP) show a composition bias toward basic and acidic residues. Lys315 provides a ligand contact to ADP-alpha-D-glucose.

Belongs to the glycosyltransferase 1 family. Bacterial/plant glycogen synthase subfamily. In terms of tissue distribution, expressed in roots, leaves and flowers.

It is found in the plastid. The protein resides in the chloroplast. Its subcellular location is the amyloplast. The enzyme catalyses [(1-&gt;4)-alpha-D-glucosyl](n) + ADP-alpha-D-glucose = [(1-&gt;4)-alpha-D-glucosyl](n+1) + ADP + H(+). The protein operates within glycan biosynthesis; starch biosynthesis. In terms of biological role, involved in the synthesis of glycan chains within amylopectin in leaves. Is required to produce chains with a degree of polymerization of 12 to 25 (DP12-DP25). In Arabidopsis thaliana (Mouse-ear cress), this protein is Starch synthase 2, chloroplastic/amyloplastic (SS2).